Consider the following 502-residue polypeptide: Aspartyl/glutamyl-tRNA(Asn/Gln) amidotransferase subunit B (502 aa).

This sequence belongs to the GatB/GatE family. GatB subfamily. As to quaternary structure, heterotrimer of A, B and C subunits.

The catalysed reaction is L-glutamyl-tRNA(Gln) + L-glutamine + ATP + H2O = L-glutaminyl-tRNA(Gln) + L-glutamate + ADP + phosphate + H(+). It catalyses the reaction L-aspartyl-tRNA(Asn) + L-glutamine + ATP + H2O = L-asparaginyl-tRNA(Asn) + L-glutamate + ADP + phosphate + 2 H(+). Its function is as follows. Allows the formation of correctly charged Asn-tRNA(Asn) or Gln-tRNA(Gln) through the transamidation of misacylated Asp-tRNA(Asn) or Glu-tRNA(Gln) in organisms which lack either or both of asparaginyl-tRNA or glutaminyl-tRNA synthetases. The reaction takes place in the presence of glutamine and ATP through an activated phospho-Asp-tRNA(Asn) or phospho-Glu-tRNA(Gln). The protein is Aspartyl/glutamyl-tRNA(Asn/Gln) amidotransferase subunit B of Ruegeria sp. (strain TM1040) (Silicibacter sp.).